We begin with the raw amino-acid sequence, 384 residues long: L-aspartate decarboxylase (384 aa).

An N6-(pyridoxal phosphate)lysine modification is found at Lys-231.

It belongs to the group II decarboxylase family. MfnA subfamily. As to quaternary structure, homodimer. Can also form homohexamers. Pyridoxal 5'-phosphate is required as a cofactor.

It catalyses the reaction L-aspartate + H(+) = beta-alanine + CO2. It functions in the pathway cofactor biosynthesis; coenzyme A biosynthesis. With respect to regulation, inhibited by hydroxylamine. Its function is as follows. Catalyzes the decarboxylation of L-aspartate to produce beta-alanine. In vitro, can also catalyze the decarboxylation of L-glutamate to produce 4-aminobutanoate, but this activity does not seem necessary in vivo. Shows much higher activity with L-aspartate than with L-glutamate. Does not decarboxylate L-tyrosine. The sequence is that of L-aspartate decarboxylase from Thermococcus kodakarensis (strain ATCC BAA-918 / JCM 12380 / KOD1) (Pyrococcus kodakaraensis (strain KOD1)).